Here is an 88-residue protein sequence, read N- to C-terminus: Elongation factor 1-beta (88 aa).

The protein belongs to the EF-1-beta/EF-1-delta family.

Its function is as follows. Promotes the exchange of GDP for GTP in EF-1-alpha/GDP, thus allowing the regeneration of EF-1-alpha/GTP that could then be used to form the ternary complex EF-1-alpha/GTP/AAtRNA. The sequence is that of Elongation factor 1-beta (ef1b) from Thermoplasma acidophilum (strain ATCC 25905 / DSM 1728 / JCM 9062 / NBRC 15155 / AMRC-C165).